Here is a 292-residue protein sequence, read N- to C-terminus: Nanos homolog 1 (292 aa).

2 disordered regions span residues 1-41 (MEAF…QPFS) and 68-121 (GGNG…SRGR). Positions 40–56 (FSSWNDYLGLATLITKA) are essential for its translational repressor activity. Positions 76–87 (PPSSSSSSCCSP) are enriched in low complexity. Positions 104–115 (DYDEDDDDDSDE) are enriched in acidic residues. The Nanos-type zinc finger occupies 213-267 (VCVFCRNNKEAMALYTTHILKGPDGRVLCPVLRRYTCPLCGASGDNAHTIKYCPL). Residues Cys-214, Cys-217, His-230, Cys-241, Cys-249, Cys-252, His-260, and Cys-265 each contribute to the Zn(2+) site. Short sequence motifs (C2HC) lie at residues 214–241 (CVFC…RVLC) and 249–265 (CPLC…IKYC). The segment at 268 to 292 (SKVPPPPARPPPRSARDGPPGKKLR) is disordered. Residues 269-280 (KVPPPPARPPPR) are compositionally biased toward pro residues. Positions 281–292 (SARDGPPGKKLR) are enriched in basic and acidic residues.

This sequence belongs to the nanos family. As to quaternary structure, interacts with PUM2, SNAPIN and CTNNB1. Interacts (via N-terminal region) with CTNND1. Interacts with DDX20 (via N-terminal region). As to expression, testis and ovary (at protein level). Predominantly expressed in testis. Specifically expressed during germline development. In adult tissues, it is mainly expressed in spermatogonia, the stem cells of the germline. Also expressed during meiosis in spermatocytes. Not present in late, post-meiotic stage germ cells. Expressed in fetal ovaries, while it is weakly or not expressed in mature postmeiotic oocytes, suggesting that it may be expressed in premeiotic female germ cells. Expressed at high levels only in the E-cadherin deficient cell lines. Highly expressed in lung carcinomas and mostly detected in invasive tumor cells and its expression correlates with tumor aggressiveness.

It is found in the cytoplasm. Its subcellular location is the perinuclear region. In terms of biological role, may act as a translational repressor which regulates translation of specific mRNAs by forming a complex with PUM2 that associates with the 3'-UTR of mRNA targets. Capable of interfering with the proadhesive and anti-invasive functions of E-cadherin. Up-regulates the production of MMP14 to promote tumor cell invasion. This chain is Nanos homolog 1 (NANOS1), found in Homo sapiens (Human).